The primary structure comprises 245 residues: Keratin-associated protein 10-12 (245 aa).

Repeat copies occupy residues cysteine 36–proline 40, cysteine 41–alanine 45, cysteine 62–threonine 66, cysteine 84–serine 88, cysteine 94–serine 98, cysteine 104–valine 108, cysteine 109–valine 113, cysteine 114–valine 118, cysteine 119–valine 123, cysteine 124–serine 128, cysteine 131–serine 135, cysteine 141–serine 145, cysteine 151–valine 155, cysteine 156–isoleucine 160, cysteine 161–valine 165, cysteine 173–serine 177, cysteine 183–serine 187, cysteine 188–serine 192, and cysteine 214–threonine 218. The interval cysteine 36–threonine 218 is 19 X 5 AA repeats of C-C-X(3).

It belongs to the KRTAP type 10 family. In terms of assembly, interacts with hair keratins. As to expression, restricted to a narrow region of the hair fiber cuticle, lying approximately 20 cell layers above the apex of the dermal papilla of the hair root; not detected in any other tissues.

Its function is as follows. In the hair cortex, hair keratin intermediate filaments are embedded in an interfilamentous matrix, consisting of hair keratin-associated proteins (KRTAP), which are essential for the formation of a rigid and resistant hair shaft through their extensive disulfide bond cross-linking with abundant cysteine residues of hair keratins. The matrix proteins include the high-sulfur and high-glycine-tyrosine keratins. The chain is Keratin-associated protein 10-12 (KRTAP10-12) from Homo sapiens (Human).